The sequence spans 237 residues: Pyridoxal phosphate homeostasis protein (237 aa).

Position 31 is an N6-(pyridoxal phosphate)lysine (Lys31).

It belongs to the pyridoxal phosphate-binding protein YggS/PROSC family.

The protein resides in the cytoplasm. Its subcellular location is the nucleus. Functionally, pyridoxal 5'-phosphate (PLP)-binding protein, which may be involved in intracellular homeostatic regulation of pyridoxal 5'-phosphate (PLP), the active form of vitamin B6. The protein is Pyridoxal phosphate homeostasis protein of Schizosaccharomyces pombe (strain 972 / ATCC 24843) (Fission yeast).